A 119-amino-acid chain; its full sequence is Acidic phospholipase A2 E (119 aa).

Disulfide bonds link C11–C71, C26–C118, C28–C44, C43–C99, C50–C92, C60–C85, and C78–C90. Ca(2+) contacts are provided by Y27, G29, and G31. H47 is an active-site residue. D48 is a binding site for Ca(2+). The active site involves D93.

Belongs to the phospholipase A2 family. Group I subfamily. D49 sub-subfamily. The cofactor is Ca(2+). As to expression, expressed by the venom gland.

The protein resides in the secreted. The enzyme catalyses a 1,2-diacyl-sn-glycero-3-phosphocholine + H2O = a 1-acyl-sn-glycero-3-phosphocholine + a fatty acid + H(+). In terms of biological role, PLA2 catalyzes the calcium-dependent hydrolysis of the 2-acyl groups in 3-sn-phosphoglycerides. The protein is Acidic phospholipase A2 E of Naja oxiana (Central Asian cobra).